The chain runs to 530 residues: Ubiquitin carboxyl-terminal hydrolase 17-like protein 12 (530 aa).

The USP domain occupies Ala80–Lys375. Cys89 acts as the Nucleophile in catalysis. The Proton acceptor role is filled by His334. 2 stretches are compositionally biased toward basic and acidic residues: residues Ser382–Arg392 and Asp398–His412. 2 disordered regions span residues Ser382–His412 and Asn477–Gln530. Over residues Ser484–Thr495 the composition is skewed to low complexity. Residues His496–Leu505 are compositionally biased toward polar residues. The span at Gly510–Arg524 shows a compositional bias: basic residues.

The protein belongs to the peptidase C19 family. USP17 subfamily.

The protein localises to the nucleus. The protein resides in the endoplasmic reticulum. It catalyses the reaction Thiol-dependent hydrolysis of ester, thioester, amide, peptide and isopeptide bonds formed by the C-terminal Gly of ubiquitin (a 76-residue protein attached to proteins as an intracellular targeting signal).. Deubiquitinating enzyme that removes conjugated ubiquitin from specific proteins to regulate different cellular processes that may include cell proliferation, progression through the cell cycle, apoptosis, cell migration, and the cellular response to viral infection. The sequence is that of Ubiquitin carboxyl-terminal hydrolase 17-like protein 12 (USP17L12) from Homo sapiens (Human).